The chain runs to 1334 residues: MPLVRFEVRNEVGLGDPDLYGGGGGGGGGGGGGGVGAAAKKGGEAEPKALLEGVAVAGLVGILRQLGDLAEFAADVFHDLHEQVITTSARGRKVLTRVQNIEAALPSLEKAVKNQKSHIHFTYVPGSDWHAQLKDEQNHLLSSDLPRFMMDSYEECRDPPRLYLLDKFDNAGAGACSRRHSDPSYFKKAWDMMRADKTGNFQREKKSQKIKRKGSRLREPYHGQTTPRQRNGELQRALTAVQLTSRHFATPSTDGRSLSENRSTSDVRSNPDNISRSSSFSSKARLSFTEQVLDTKPTVVPHENGHDKLSNNNLHKLSNTPLHTRLNGTSADDLGDDLKQSSLLDDMTARSPSVKWDEKAEITMSTTSVYCDDVVMDKAEHVQSKCISPEQQEIDHREMETLEQQEALHQKAKQLLVSSGLNHHDEVPSETDNYVDALNTLESETETEPELQTKSRVKPVPSLNVDVPQVELIDNIVTESPDSSVAEFPDAYQNSSMPPAPESAADFPSLSSADAPDISEPVLSGYTANPHPEVSAIATNTPVSNTEDAPGPLEISESASRAYIITLPNQSLPDSKEIPDSKAEDAPIDSPEKLEPGPSSYTPTIPIKESSIVSQNTNAENVSGDCSEGTACAISYSQHIISDKPTNEVSATNSSPDDTSSDEDTVESGGIVEVSNSQPMPLNDSLENGCATQGLPANAPTNSTGVSSVKLWTNAGLFGLEPSKPPVFGAHDGPKEDTTPGHTQPQLCHSTGCPEVHFSKPTESAQVYVPNGNSPITSSFVGKLVGICPGSTSHSSETNQSTVRTPDTVIGQTEGSTGCSTSFEHSDHKNIIGKQTSISELLESEDSAENGAEMFSKTDMTGRNNMNQVSASSFSSIAQRFLANTLQRRTPKYTDLPMSSVIVNTDANGTDESTQISSLAPNETTFEASQFEKKTENDTNGLPKSSLFSSSHYSEKSSPPLEYMKISFHPMSAFEMSKLDLDFSDENLHENADDMMLPTFQLLPGSSVPQLGSGSESEDDTFGRSYSYSSYDDLSPRLYSNSELWDQEDANGLEDHDMHNNPNQIGSFGAPISSFVEFEQMDLSGAKSTVSLTDLGDDNGLGTLDSHPAGELPNFDTLMAHQNEAFIPHNPVSLSPDEGQLPPPPPLPPMQWRTMRQVASVEEGRGSAAKEDMLESTSDLPPVHTPVQEEHLLPIAPPDQQNLLPIAPPDQQGHAKENDRKVDGVKEISNPLDIEIRASLLQQIRDKSGQQKLNGHEKSKAVGNDTKNLDEREELLQQIRSKTFNLRRTNASKTNTSSPTTANSSVVAILEKANAIRQAVASDEGGDDDSWSDI.

A compositionally biased stretch (basic and acidic residues) spans 197 to 207 (KTGNFQREKKS). Disordered stretches follow at residues 197-281 (KTGN…SSFS), 294-331 (DTKPTVVPHENGHDKLSNNNLHKLSNTPLHTRLNGTSA), 481-516 (PDSSVAEFPDAYQNSSMPPAPESAADFPSLSSADAP), 568-602 (PNQSLPDSKEIPDSKAEDAPIDSPEKLEPGPSSYT), 643-668 (DKPTNEVSATNSSPDDTSSDEDTVES), 791-832 (STSH…KNII), 931-956 (FEKKTENDTNGLPKSSLFSSSHYSEK), 1000-1026 (FQLLPGSSVPQLGSGSESEDDTFGRSY), 1248-1268 (SGQQKLNGHEKSKAVGNDTKN), and 1280-1304 (RSKTFNLRRTNASKTNTSSPTTANS). Positions 241 to 256 (VQLTSRHFATPSTDGR) are enriched in polar residues. Residues 310 to 319 (SNNNLHKLSN) are compositionally biased toward low complexity. Residues 320 to 330 (TPLHTRLNGTS) are compositionally biased toward polar residues. The segment covering 574–595 (DSKEIPDSKAEDAPIDSPEKLE) has biased composition (basic and acidic residues). Polar residues predominate over residues 791–823 (STSHSSETNQSTVRTPDTVIGQTEGSTGCSTSF). The span at 945–956 (SSLFSSSHYSEK) shows a compositional bias: low complexity. Residues 1248–1260 (SGQQKLNGHEKSK) show a composition bias toward basic and acidic residues. The region spanning 1271–1289 (EREELLQQIRSKTFNLRRT) is the WH2 domain. Over residues 1289-1304 (TNASKTNTSSPTTANS) the composition is skewed to low complexity.

It belongs to the SCAR/WAVE family.

It localises to the cytoplasm. The protein resides in the cytoskeleton. In terms of biological role, involved in regulation of actin and microtubule organization. Part of a WAVE complex that activates the Arp2/3 complex. This chain is SCAR-like protein 2, found in Oryza sativa subsp. japonica (Rice).